Consider the following 99-residue polypeptide: UPF0122 protein UUR10_0158 (99 aa).

It belongs to the UPF0122 family.

Might take part in the signal recognition particle (SRP) pathway. This is inferred from the conservation of its genetic proximity to ftsY/ffh. May be a regulatory protein. In Ureaplasma urealyticum serovar 10 (strain ATCC 33699 / Western), this protein is UPF0122 protein UUR10_0158.